The chain runs to 162 residues: UPF0114 protein PSEEN0819 (162 aa).

3 helical membrane-spanning segments follow: residues 15 to 35 (LLAPIYFGLSLGLLALALKFF), 53 to 73 (LVLVILSLIDMSLVGGLLVMV), and 136 to 156 (LMWYVIIHMTFVVSAFVMGYL).

Belongs to the UPF0114 family.

The protein localises to the cell membrane. This Pseudomonas entomophila (strain L48) protein is UPF0114 protein PSEEN0819.